The primary structure comprises 241 residues: Endodeoxyribonuclease NucC (241 aa).

Active-site residues include Asp-73, Glu-104, and Lys-106. Mg(2+) is bound by residues Asp-73 and Glu-104.

It belongs to the NucC endonuclease family. In terms of assembly, self-oligomerizes. Forms homotrimers; in the presence of cAAA the trimers associate face-to-face to form homohexamers. The 2 cAAA-binding sites are on the exterior of the hexamer at the three-way junction, there are maximally 2 cyclic nucleotides per hexamer. The cofactor is Mg(2+).

With respect to regulation, activated by cAAA and to a lesser extent cAA and cAAG; cAAA and cAA are products of its cognate CD-NTase. Cyclic nucleotide binding causes hexamerization. Cyclic nucleotide binding causes a series of shifts that enclose the cAAA molecule, enable hexamer formation and juxtapose pairs of active sites to allow dsDNA cleavage. Effector DNase of a CBASS antivirus system. CBASS (cyclic oligonucleotide-based antiphage signaling system) provides immunity against bacteriophage. The CD-NTase protein synthesizes cyclic nucleotides in response to infection; these serve as specific second messenger signals. The signals activate a diverse range of effectors, leading to bacterial cell death and thus abortive phage infection. A type III-C(AAA) CBASS system. Its function is as follows. A cyclic nucleotide-activated dsDNase. In the presence of 3',3',3'-cyclic AMP-AMP-AMP (cAAA), and to a lesser extent 3',3',3'-cyclic AMP-AMP-GMP (cAAG) and cyclic-di-AMP (c-di-AMP), endonucleolytically degrades dsDNA. Binds one cAAA in a pocket on one surface of the trimer; cAAA binding promotes hexamerization, which is necessary for nuclease activation. Also binds c-diAMP or linear di-AMP with lower affinity. The nuclease digests dsDNA to about 50 bp lengths with a 2-base 3' overhang and a consensus recognition site of 5'-Axx|T-3'. DNA has been modeled to contact a pair of juxtaposed active sites (one from each layer of the hexamer), accounting for cleavage on both strands and the 2-base overhang. In terms of biological role, protects E.coli strain JP313 against bacteriophage lambda cI- infection. When the cdnC-cap7-cap6-nucC operon is transformed into a susceptible strain it confers bacteriophage immunity. Mutations in the sensor (Cap7 also called HORMA) or effector proteins (CdnC, NucC) but not the disassembly protein (Cap6 also called Trip13) no longer confer immunity. The presence of the intact operon leads to culture collapse and cell death which occurs before the phage has finished its replication cycle, thus protecting non-infected bacteria by aborting the phage infection and preventing its propagation. This Escherichia coli (strain MS 115-1) protein is Endodeoxyribonuclease NucC.